The sequence spans 246 residues: Acetoacetate decarboxylase (246 aa).

Catalysis depends on K116, which acts as the Schiff-base intermediate with acetoacetate.

The protein belongs to the ADC family. In terms of assembly, homododecamer.

It carries out the reaction acetoacetate + H(+) = acetone + CO2. Its function is as follows. Catalyzes the conversion of acetoacetate to acetone and carbon dioxide. The polypeptide is Acetoacetate decarboxylase (Chromobacterium violaceum (strain ATCC 12472 / DSM 30191 / JCM 1249 / CCUG 213 / NBRC 12614 / NCIMB 9131 / NCTC 9757 / MK)).